The sequence spans 207 residues: uncharacterized protein (207 aa).

This is an uncharacterized protein from Bacillus subtilis (strain 168).